Consider the following 202-residue polypeptide: Small ribosomal subunit protein uS4c (202 aa).

The 64-residue stretch at 90-153 (MRLDNVTFRL…KSETIISKNI (64 aa)) folds into the S4 RNA-binding domain.

It belongs to the universal ribosomal protein uS4 family. In terms of assembly, part of the 30S ribosomal subunit. Contacts protein S5. The interaction surface between S4 and S5 is involved in control of translational fidelity.

Its subcellular location is the plastid. It is found in the chloroplast. Its function is as follows. One of the primary rRNA binding proteins, it binds directly to 16S rRNA where it nucleates assembly of the body of the 30S subunit. Functionally, with S5 and S12 plays an important role in translational accuracy. The polypeptide is Small ribosomal subunit protein uS4c (rps4) (Hypnum cupressiforme (Cypress-leaved plait-moss)).